Here is a 229-residue protein sequence, read N- to C-terminus: Cytochrome c oxidase subunit 2 (229 aa).

At 1 to 26 (MATWMNINLQDANSSTMEQLTMFHDH) the chain is on the mitochondrial intermembrane side. Residues 27 to 48 (TLMILTMITSIVTFIMVSMTTN) form a helical membrane-spanning segment. At 49–62 (TLINRYLLEGQTIE) the chain is on the mitochondrial matrix side. A helical membrane pass occupies residues 63–82 (FIWTTIPAITLIFIALPSLH). The Mitochondrial intermembrane segment spans residues 83 to 229 (LLYLIDEINN…LKWINKSLSS (147 aa)). Residues histidine 161, cysteine 196, glutamate 198, cysteine 200, histidine 204, and methionine 207 each contribute to the Cu cation site. Glutamate 198 contributes to the Mg(2+) binding site.

This sequence belongs to the cytochrome c oxidase subunit 2 family. In terms of assembly, component of the cytochrome c oxidase (complex IV, CIV), a multisubunit enzyme composed of a catalytic core of 3 subunits and several supernumerary subunits. The complex exists as a monomer or a dimer and forms supercomplexes (SCs) in the inner mitochondrial membrane with ubiquinol-cytochrome c oxidoreductase (cytochrome b-c1 complex, complex III, CIII). Requires Cu cation as cofactor.

Its subcellular location is the mitochondrion inner membrane. It carries out the reaction 4 Fe(II)-[cytochrome c] + O2 + 8 H(+)(in) = 4 Fe(III)-[cytochrome c] + 2 H2O + 4 H(+)(out). Its function is as follows. Component of the cytochrome c oxidase, the last enzyme in the mitochondrial electron transport chain which drives oxidative phosphorylation. The respiratory chain contains 3 multisubunit complexes succinate dehydrogenase (complex II, CII), ubiquinol-cytochrome c oxidoreductase (cytochrome b-c1 complex, complex III, CIII) and cytochrome c oxidase (complex IV, CIV), that cooperate to transfer electrons derived from NADH and succinate to molecular oxygen, creating an electrochemical gradient over the inner membrane that drives transmembrane transport and the ATP synthase. Cytochrome c oxidase is the component of the respiratory chain that catalyzes the reduction of oxygen to water. Electrons originating from reduced cytochrome c in the intermembrane space (IMS) are transferred via the dinuclear copper A center (CU(A)) of subunit 2 and heme A of subunit 1 to the active site in subunit 1, a binuclear center (BNC) formed by heme A3 and copper B (CU(B)). The BNC reduces molecular oxygen to 2 water molecules using 4 electrons from cytochrome c in the IMS and 4 protons from the mitochondrial matrix. In Oncopeltus fasciatus (Large milkweed bug), this protein is Cytochrome c oxidase subunit 2 (COII).